A 110-amino-acid polypeptide reads, in one-letter code: Translation initiation factor 1A 3 (110 aa).

The tract at residues 1-29 (MIRKRQSGSNKSVSSGNNQEVTRVRTPRK) is disordered. Residues 7 to 18 (SGSNKSVSSGNN) are compositionally biased toward low complexity. Residues 22–96 (TRVRTPRKDR…SKADVIWKYT (75 aa)) form the S1-like domain.

Belongs to the eIF-1A family.

Seems to be required for maximal rate of protein biosynthesis. Enhances ribosome dissociation into subunits and stabilizes the binding of the initiator Met-tRNA(I) to 40 S ribosomal subunits. This is Translation initiation factor 1A 3 (eIF1A3) from Methanosarcina acetivorans (strain ATCC 35395 / DSM 2834 / JCM 12185 / C2A).